Reading from the N-terminus, the 57-residue chain is Small ribosomal subunit protein eS27 (57 aa).

C10, C13, C29, and C32 together coordinate Zn(2+). The segment at 10-32 (CDDCENEQVLFGKAANTVNCAVC) adopts a C4-type zinc-finger fold.

This sequence belongs to the eukaryotic ribosomal protein eS27 family. In terms of assembly, part of the 30S ribosomal subunit. It depends on Zn(2+) as a cofactor.

The chain is Small ribosomal subunit protein eS27 from Natronomonas pharaonis (strain ATCC 35678 / DSM 2160 / CIP 103997 / JCM 8858 / NBRC 14720 / NCIMB 2260 / Gabara) (Halobacterium pharaonis).